The following is a 358-amino-acid chain: Alanine racemase (358 aa).

Lys-35 serves as the catalytic Proton acceptor; specific for D-alanine. At Lys-35 the chain carries N6-(pyridoxal phosphate)lysine. Arg-130 lines the substrate pocket. Tyr-255 (proton acceptor; specific for L-alanine) is an active-site residue. Met-303 serves as a coordination point for substrate.

The protein belongs to the alanine racemase family. Pyridoxal 5'-phosphate serves as cofactor.

It catalyses the reaction L-alanine = D-alanine. Its pathway is amino-acid biosynthesis; D-alanine biosynthesis; D-alanine from L-alanine: step 1/1. Functionally, catalyzes the interconversion of L-alanine and D-alanine. May also act on other amino acids. In Shewanella baltica (strain OS185), this protein is Alanine racemase (alr).